The sequence spans 192 residues: MSLSPHQKTAGWLVGVVVVMGAASFAAVPFYDWFCRVTGFGGTTAVASEAPAEVLDRTIRVRFDASREAGMPWEFRPLQREMEVRIGETGLAFYEAYNPTDRTVAGTASYNVTPDAAGGYFAKIACFCFTEQVLAPGERVEMPVSFYVDPAIVKDRDGRYVRQITLSYTFHQTELPEEQAALAARPAGIDVN.

Topologically, residues 1 to 9 (MSLSPHQKT) are cytoplasmic. A helical; Signal-anchor for type II membrane protein transmembrane segment spans residues 10–30 (AGWLVGVVVVMGAASFAAVPF). The Periplasmic segment spans residues 31-192 (YDWFCRVTGF…AARPAGIDVN (162 aa)).

It belongs to the COX11/CtaG family.

It is found in the cell inner membrane. In terms of biological role, exerts its effect at some terminal stage of cytochrome c oxidase synthesis, probably by being involved in the insertion of the copper B into subunit I. The protein is Cytochrome c oxidase assembly protein CtaG of Cereibacter sphaeroides (strain ATCC 17025 / ATH 2.4.3) (Rhodobacter sphaeroides).